A 751-amino-acid chain; its full sequence is SKI family transcriptional corepressor 1 homolog-B (751 aa).

Disordered regions lie at residues 1–30 (MESI…SGPP), 234–267 (SRKR…PHKT), 386–434 (LDVS…GIPP), 459–569 (YGNR…HGNK), and 600–635 (QRET…SEER). Polar residues-rich tracts occupy residues 14-27 (SSCS…QSYS) and 244-259 (SESS…TQGE). Basic and acidic residues predominate over residues 416–428 (RNEEDKSGDESRS). The span at 479 to 491 (SESSSYRSVSPDV) shows a compositional bias: low complexity. Residues 539-558 (QENTQMHTLNDLHSTNSSET) show a composition bias toward polar residues. Basic and acidic residues-rich tracts occupy residues 559-569 (RPSDMESHGNK), 603-612 (TSVKDVHEEE), and 620-635 (MEPK…SEER). The stretch at 666–704 (SMAKEELQKQLVEQVELRKKLEREFQNLKDSFQDQMKRE) forms a coiled coil.

It belongs to the SKI family.

It is found in the nucleus. May inhibit BMP signaling. This chain is SKI family transcriptional corepressor 1 homolog-B (skor1b), found in Danio rerio (Zebrafish).